A 327-amino-acid chain; its full sequence is MKLNWETTLLILLVLEILLFGAINPRMLDINMLLFSTSDFICIGIVALPLTLVIISGGIDISLGSTIGLCAIALGVMMQFGLPMYLAVPLTLLLGLLCGLFNAALIHYTGISPLVITLGTLYLYGGGALLLSGLAGATGYEGIGGFPDSFTAFANLTVLGLPIPLVLFAVITFFFWLITHRGRFGRHLFLIGQNPRAARYAALSVNGMPYALYGLVGVASAIAALVMVSYFGSARSDLGRDLLMPALTAAVLGGANIYGGSGSVIGTALAALLVGYLQQGLQMVGIPNQVSSALSGALLVVVVMGRSLSLHREWVRNFFTKHTRSLR.

9 helical membrane passes run 3–23 (LNWE…FGAI), 41–61 (ICIG…GIDI), 63–83 (LGST…FGLP), 86–106 (LAVP…AALI), 114–134 (LVIT…LSGL), 158–178 (VLGL…FWLI), 211–231 (ALYG…VSYF), 257–277 (IYGG…VGYL), and 283–303 (MVGI…VVVV).

This sequence belongs to the binding-protein-dependent transport system permease family. AraH/RbsC subfamily. As to quaternary structure, the complex is composed of two ATP-binding proteins (LsrA), two transmembrane proteins (LsrC and LsrD) and a solute-binding protein (LsrB).

Its subcellular location is the cell inner membrane. Functionally, part of the ABC transporter complex LsrABCD involved in autoinducer 2 (AI-2) import. Probably responsible for the translocation of the substrate across the membrane. In Enterobacter sp. (strain 638), this protein is Autoinducer 2 import system permease protein LsrD (lsrD).